The primary structure comprises 338 residues: Peptidoglycan deacetylase-like protein FGM2 (338 aa).

Zn(2+) contacts are provided by Asp49, His124, and His128. One can recognise a NodB homology domain in the interval 65–257; it reads LSDYSAGIFA…VTNSHGFVSS (193 aa).

Belongs to the polysaccharide deacetylase family.

Its function is as follows. Peptidoglycan deacetylase-like protein; part of the Fg3_54/C64 gene cluster that mediates the biosynthesis of the octapeptide fusaoctaxin A, a virulence factor that is required for cell-to-cell invasiveness of plant host. The 2 nonribosomal peptide synthetases NRPS9 and NRPS5 form an assembly line which likely utilizes GABA as a starter unit (loaded on the unique module M1 of NRPS9) and sequentially incorporates seven extender units composed of the residues L-Ala, L-allo-Ile, L-Ser, L-Val, L-Ser, L-Leu and L-Leu, respectively. During the process, each of the residues that are tethered on modules M3-M7 of NRPS5 containing an E domain can undergo an epimerization reaction to produce a D-configuration before the transpeptidation reaction occurs. The elongation of the peptidyl chain might be terminated by module M8-mediated L-Leu incorporation, followed by R domain-catalyzed 4 electron reduction to release the resulting octapeptide from the assembly line as an alcohol. Fusaoctaxin A is cleaved by the cluster specific ABC transporter FGM5 to the pentapeptide fusapentaxin A and the tripeptide fusatrixin A. The other enzymes from the cluster, FGM1, FGM2, FGM3 and FGM9 seem not to be involved in the biosynthesis of fusaoctaxin A and their functions have still to be determined. The polypeptide is Peptidoglycan deacetylase-like protein FGM2 (Gibberella zeae (strain ATCC MYA-4620 / CBS 123657 / FGSC 9075 / NRRL 31084 / PH-1) (Wheat head blight fungus)).